The sequence spans 338 residues: GTPase Obg (338 aa).

Residues 1–159 (MQFIDEVKIH…RWLRLELKLM (159 aa)) enclose the Obg domain. The tract at residues 66–91 (KAGRGKNGMGKDRHGANGDDLTIPVP) is disordered. One can recognise an OBG-type G domain in the interval 160 to 331 (ADVGLLGFPN…LLDEIARHLW (172 aa)). GTP is bound by residues 166–173 (GFPNVGKS), 191–195 (FTTIK), 213–216 (DIPG), 283–286 (NKID), and 312–314 (SAA). Mg(2+) is bound by residues Ser-173 and Thr-193.

It belongs to the TRAFAC class OBG-HflX-like GTPase superfamily. OBG GTPase family. As to quaternary structure, monomer. The cofactor is Mg(2+).

The protein resides in the cytoplasm. In terms of biological role, an essential GTPase which binds GTP, GDP and possibly (p)ppGpp with moderate affinity, with high nucleotide exchange rates and a fairly low GTP hydrolysis rate. Plays a role in control of the cell cycle, stress response, ribosome biogenesis and in those bacteria that undergo differentiation, in morphogenesis control. This Geobacter metallireducens (strain ATCC 53774 / DSM 7210 / GS-15) protein is GTPase Obg.